We begin with the raw amino-acid sequence, 621 residues long: Rab11 family-interacting protein 4A (621 aa).

EF-hand domains lie at Ala14–Gly49 and Gly47–Cys82. 9 residues coordinate Ca(2+): Asp27, Asp29, Asp31, Tyr33, His38, Asp60, Asn62, Arg66, and Asp71. 2 disordered regions span residues Tyr132–Gly172 and Asp203–Pro243. Residues Ala151–Ser161 are compositionally biased toward low complexity. A compositionally biased stretch (basic and acidic residues) spans Glu162–Gly172. Residues Thr225–Pro243 are compositionally biased toward polar residues. Residues Asp348–Leu556 adopt a coiled-coil conformation. The FIP-RBD domain maps to Glu558–Lys620.

As to quaternary structure, homodimer. Forms a complex with Rab11 (rab11a or rab11b) and arf6. As to expression, isoform 1 is predominantly expressed in neural tissues. Isoform B is expressed ubiquitously. In the developing retina, it is expressed in progenitors throughout the retina at early stages and becomes restricted to the ganglion cell layer and ciliary marginal zone as differentiation proceeds.

It is found in the recycling endosome membrane. Its subcellular location is the cleavage furrow. The protein localises to the midbody. The protein resides in the cytoplasmic vesicle. Acts as a regulator of endocytic traffic by participating in membrane delivery. Required for the abscission step in cytokinesis, possibly by acting as an 'address tag' delivering recycling endosome membranes to the cleavage furrow during late cytokinesis. May play a role in differentiation during retinal development. The chain is Rab11 family-interacting protein 4A (rab11fip4a) from Danio rerio (Zebrafish).